A 299-amino-acid chain; its full sequence is Mitochondrial 2-oxodicarboxylate carrier (299 aa).

3 Solcar repeats span residues 11–100, 107–196, and 205–294; these read NEAS…YKKL, SPAL…VKNI, and LEFL…TYSW. The next 6 helical transmembrane spans lie at 17–37, 62–82, 100–120, 179–199, 211–231, and 274–290; these read ILAGGSAGLVEICLMHPLDVV, MIFRTEGLFGFYKGILPPILA, LLGYVSLSPALTFAVAGLGSG, HGVFNMVYFGFYFNVKNIIPV, FGIGLLSGTIASVINIPFDVA, and IMRLGPGGAVMLLVYEY.

It belongs to the mitochondrial carrier (TC 2.A.29) family.

Its subcellular location is the mitochondrion inner membrane. The enzyme catalyses 2-oxoadipate(in) + 2-oxoglutarate(out) = 2-oxoadipate(out) + 2-oxoglutarate(in). The catalysed reaction is hexanedioate(in) + 2-oxoglutarate(out) = hexanedioate(out) + 2-oxoglutarate(in). It catalyses the reaction L-2-aminoadipate(in) + 2-oxoglutarate(out) = L-2-aminoadipate(out) + 2-oxoglutarate(in). It carries out the reaction glutarate(in) + 2-oxoglutarate(out) = glutarate(out) + 2-oxoglutarate(in). The enzyme catalyses 2-oxoheptanedioate(in) + 2-oxoglutarate(out) = 2-oxoheptanedioate(out) + 2-oxoglutarate(in). The catalysed reaction is heptanedioate(in) + 2-oxoglutarate(out) = heptanedioate(out) + 2-oxoglutarate(in). It catalyses the reaction citrate(in) + 2-oxoglutarate(out) = citrate(out) + 2-oxoglutarate(in). In terms of biological role, transports dicarboxylates across the inner membranes of mitochondria by a counter-exchange mechanism. Can transport 2-oxoadipate (2-oxohexanedioate), 2-oxoglutarate, adipate (hexanedioate), glutarate, and to a lesser extent, pimelate (heptanedioate), 2-oxopimelate (2-oxoheptanedioate), 2-aminoadipate (2-aminohexanedioate), oxaloacetate, and citrate. Plays a central role in catabolism of lysine, hydroxylysine, and tryptophan, by transporting common metabolite intermediates (such as 2-oxoadipate) into the mitochondria, where it is converted into acetyl-CoA and can enter the citric acid (TCA) cycle. The protein is Mitochondrial 2-oxodicarboxylate carrier (SLC25A21) of Bos taurus (Bovine).